We begin with the raw amino-acid sequence, 719 residues long: Pesticidal crystal protein Cry1Ia (719 aa).

The protein belongs to the delta endotoxin family.

Functionally, promotes colloidosmotic lysis by binding to the midgut epithelial cells of certain coleopteran and lepidopteran species. Active on Plutella xylostella and Bombyx mori. The protein is Pesticidal crystal protein Cry1Ia (cry1Ia) of Bacillus thuringiensis subsp. kurstaki.